A 265-amino-acid polypeptide reads, in one-letter code: Ribosomal RNA small subunit methyltransferase A (265 aa).

The S-adenosyl-L-methionine site is built by His13, Leu15, Gly40, Glu62, Asp87, and Asn106.

It belongs to the class I-like SAM-binding methyltransferase superfamily. rRNA adenine N(6)-methyltransferase family. RsmA subfamily.

The protein localises to the cytoplasm. The enzyme catalyses adenosine(1518)/adenosine(1519) in 16S rRNA + 4 S-adenosyl-L-methionine = N(6)-dimethyladenosine(1518)/N(6)-dimethyladenosine(1519) in 16S rRNA + 4 S-adenosyl-L-homocysteine + 4 H(+). In terms of biological role, specifically dimethylates two adjacent adenosines (A1518 and A1519) in the loop of a conserved hairpin near the 3'-end of 16S rRNA in the 30S particle. May play a critical role in biogenesis of 30S subunits. The polypeptide is Ribosomal RNA small subunit methyltransferase A (Persephonella marina (strain DSM 14350 / EX-H1)).